A 168-amino-acid chain; its full sequence is Gremlin-2 (168 aa).

Residues 1–21 (MFWKLSLTLLLVAVLVKVAET) form the signal peptide. Asparagine 40 carries an N-linked (GlcNAc...) asparagine glycan. 4 disulfide bridges follow: cysteine 73/cysteine 123, cysteine 87/cysteine 137, cysteine 97/cysteine 155, and cysteine 101/cysteine 157. The region spanning 73–163 (CKTQPLRQTV…HCRCMSVNLS (91 aa)) is the CTCK domain. N-linked (GlcNAc...) asparagine glycosylation is present at asparagine 161.

It belongs to the DAN family. As to quaternary structure, homodimer. Interacts with BMP2, BMP4 and BMP7, but has lower affinity for BMP7 than for BMP2 and BMP4. Binds heparin; this impairs the interaction with BMP2. In terms of processing, N-glycosylated. Highly expressed in the ovary, followed by brain, spleen, colon, kidney and uterus. In ovary expressed in granulosa cells of selective early antral follicles.

The protein localises to the secreted. In terms of biological role, cytokine that inhibits the activity of BMP2 and BMP4 in a dose-dependent manner, and thereby modulates signaling by BMP family members. Contributes to the regulation of embryonic morphogenesis via BMP family members. Antagonizes BMP4-induced suppression of progesterone production in granulosa cells. The chain is Gremlin-2 (Grem2) from Mus musculus (Mouse).